A 590-amino-acid chain; its full sequence is G protein-coupled receptor kinase 5 (590 aa).

Residues 1 to 185 (MELENIVANT…LERQPVTKNT (185 aa)) are N-terminal. The tract at residues 20–39 (GGKRKGKSKKWKEILKFPHI) is interaction with calmodulin. The RGS domain occupies 53–171 (YCSLCDKQPV…LDSMYFDRFL (119 aa)). The Protein kinase domain occupies 186 to 448 (FRQYRVLGKG…AAEVKRHPFF (263 aa)). ATP is bound by residues 192 to 200 (LGKGGFGEV) and Lys-215. Asp-311 functions as the Proton acceptor in the catalytic mechanism. The Nuclear localization signal signature appears at 388–395 (RKEKVKRE). An AGC-kinase C-terminal domain is found at 449–514 (RNMNFKRLEA…GSVPIPWQSE (66 aa)). Ser-484 carries the phosphoserine; by autocatalysis modification. At Thr-485 the chain carries Phosphothreonine; by autocatalysis. The segment at 546–565 (PKKGLLQRLFKRQHQNNSKS) is sufficient for membrane localization. Residues 554 to 590 (LFKRQHQNNSKSSPNSKTSFNHHINSNHVSSNSTGSS) form a disordered region. The segment covering 561–590 (NNSKSSPNSKTSFNHHINSNHVSSNSTGSS) has biased composition (low complexity). Ser-579 bears the Phosphoserine mark.

The protein belongs to the protein kinase superfamily. AGC Ser/Thr protein kinase family. GPRK subfamily. Interacts with ST13 (via the C-terminus 303-319 AA). Interacts with TP53/p53. Interacts with HTR4 (via C-terminus 330-346 AA); this interaction is promoted by 5-HT (serotonin). Interacts with HDAC5. Interacts with GIT1. Post-translationally, autophosphorylated. Autophosphorylation may play a critical role in the regulation of GRK5 kinase activity. Highest levels in lung, heart, retina, lingual epithelium. Very little in brain, liver, kidney.

Its subcellular location is the cytoplasm. The protein resides in the nucleus. It localises to the cell membrane. The enzyme catalyses [G-protein-coupled receptor] + ATP = [G-protein-coupled receptor]-phosphate + ADP + H(+). Its activity is regulated as follows. Inhibited by calmodulin with an IC(50) of 50 nM. Calmodulin inhibits GRK5 association with receptor and phospholipid. Functionally, serine/threonine kinase that phosphorylates preferentially the activated forms of a variety of G-protein-coupled receptors (GPCRs). Such receptor phosphorylation initiates beta-arrestin-mediated receptor desensitization, internalization, and signaling events leading to their down-regulation. Phosphorylates a variety of GPCRs, including adrenergic receptors (Beta-2 adrenergic receptor), muscarinic acetylcholine receptors (more specifically Gi-coupled M2/M4 subtypes), dopamine receptors and opioid receptors. In addition to GPCRs, also phosphorylates various substrates: Hsc70-interacting protein/ST13, TP53/p53, HDAC5, and arrestin-1/ARRB1. Phosphorylation of ARRB1 by GRK5 inhibits G-protein independent MAPK1/MAPK3 signaling downstream of 5HT4-receptors. Phosphorylation of HDAC5, a repressor of myocyte enhancer factor 2 (MEF2) leading to nuclear export of HDAC5 and allowing MEF2-mediated transcription. Phosphorylation of TP53/p53, a crucial tumor suppressor, inhibits TP53/p53-mediated apoptosis. Phosphorylation of ST13 regulates internalization of the chemokine receptor. Phosphorylates rhodopsin (RHO) (in vitro) and a non G-protein-coupled receptor, LRP6 during Wnt signaling (in vitro). This chain is G protein-coupled receptor kinase 5 (GRK5), found in Bos taurus (Bovine).